We begin with the raw amino-acid sequence, 129 residues long: MAKQPTRARKRVRKQVADGVAHIHASFNNTIVTITDRQGNALAWATAGGSGFRGSRKSTPFAAQVAAERCAEMAKEYGLKNLEVMVKGPGPGRESTVRALNAAGFRITNIVDATPIPHNGCRPPKKRRV.

The protein belongs to the universal ribosomal protein uS11 family. As to quaternary structure, part of the 30S ribosomal subunit. Interacts with proteins S7 and S18. Binds to IF-3.

Functionally, located on the platform of the 30S subunit, it bridges several disparate RNA helices of the 16S rRNA. Forms part of the Shine-Dalgarno cleft in the 70S ribosome. This is Small ribosomal subunit protein uS11 from Vibrio campbellii (strain ATCC BAA-1116).